The sequence spans 447 residues: Imidazolonepropionase (447 aa).

The Fe(3+) site is built by H85 and H87. Positions 85 and 87 each coordinate Zn(2+). Positions 94, 157, and 190 each coordinate 4-imidazolone-5-propanoate. Position 157 (Y157) interacts with N-formimidoyl-L-glutamate. H255 contributes to the Fe(3+) binding site. H255 lines the Zn(2+) pocket. E258 provides a ligand contact to 4-imidazolone-5-propanoate. D329 contacts Fe(3+). A Zn(2+)-binding site is contributed by D329. 2 residues coordinate N-formimidoyl-L-glutamate: N331 and G333. S334 contacts 4-imidazolone-5-propanoate.

This sequence belongs to the metallo-dependent hydrolases superfamily. HutI family. The cofactor is Zn(2+). It depends on Fe(3+) as a cofactor.

The protein resides in the cytoplasm. The enzyme catalyses 4-imidazolone-5-propanoate + H2O = N-formimidoyl-L-glutamate. Its pathway is amino-acid degradation; L-histidine degradation into L-glutamate; N-formimidoyl-L-glutamate from L-histidine: step 3/3. Functionally, catalyzes the hydrolytic cleavage of the carbon-nitrogen bond in imidazolone-5-propanoate to yield N-formimidoyl-L-glutamate. It is the third step in the universal histidine degradation pathway. This chain is Imidazolonepropionase, found in Shouchella clausii (strain KSM-K16) (Alkalihalobacillus clausii).